The primary structure comprises 324 residues: MGSKMLFSLTSPRLFSAVSRKPSSSFSPSPPSPSSRTQWTQLSPGKSISLRRRVFLLPAKATTEQSGPVGGDNVDSNVLPYCSINKAEKKTIGEMEQEFLQALQSFYYDGKAIMSNEEFDNLKEELMWEGSSVVMLSSDEQRFLEASMAYVSGNPILNDEEYDKLKLKLKIDGSDIVSEGPRCSLRSKKVYSDLAVDYFKMLLLNVPATVVALGLFFFLDDITGFEITYIMELPEPYSFIFTWFAAVPVIVYLALSITKLIIKDFLILKGPCPNCGTENTSFFGTILSISSGGKTNTVKCTNCGTAMVYDSGSRLITLPEGSQA.

The transit peptide at 1 to 60 (MGSKMLFSLTSPRLFSAVSRKPSSSFSPSPPSPSSRTQWTQLSPGKSISLRRRVFLLPAK) directs the protein to the chloroplast. The tract at residues 16–42 (SAVSRKPSSSFSPSPPSPSSRTQWTQL) is disordered. The Stromal segment spans residues 61-198 (ATTEQSGPVG…KVYSDLAVDY (138 aa)). A disulfide bridge links cysteine 82 with cysteine 183. The helical transmembrane segment at 199–219 (FKMLLLNVPATVVALGLFFFL) threads the bilayer. Residues 220 to 236 (DDITGFEITYIMELPEP) are Lumenal, thylakoid-facing. A helical transmembrane segment spans residues 237 to 257 (YSFIFTWFAAVPVIVYLALSI). Over 258–324 (TKLIIKDFLI…LITLPEGSQA (67 aa)) the chain is Stromal.

It belongs to the PGR5 family. In terms of assembly, homodimer and heterodimer with PGR5. Interacts with PGR5, FD2, petC, psaD1, LFNR1 and LFNR2. Also interacts with a Fe-containing cofactor (FCC). Post-translationally, disulfide bonds; Cys-300 and Cys-303 are probably involved in the formation of disulfide bridges with 'Cys-11' and 'Cys-105' of PGR5 while Cys-272 and Cys-275 are probably involved in the binding of a Fe-containing cofactor (FCC).

It is found in the plastid. Its subcellular location is the chloroplast thylakoid membrane. With respect to regulation, inhibited by antimycin A. Functionally, ferredoxin-plastoquinone reductase involved in cyclic electron flow (CEF) around photosystem I. The homodimer is probably not involved in CEF. This is PGR5-like protein 1A, chloroplastic (PGRL1A) from Arabidopsis thaliana (Mouse-ear cress).